The sequence spans 414 residues: Esterase FrsA (414 aa).

It belongs to the FrsA family.

The enzyme catalyses a carboxylic ester + H2O = an alcohol + a carboxylate + H(+). Its function is as follows. Catalyzes the hydrolysis of esters. The sequence is that of Esterase FrsA from Escherichia coli (strain K12 / DH10B).